Here is a 463-residue protein sequence, read N- to C-terminus: Exodeoxyribonuclease 7 large subunit (463 aa).

Belongs to the XseA family. As to quaternary structure, heterooligomer composed of large and small subunits.

The protein localises to the cytoplasm. It catalyses the reaction Exonucleolytic cleavage in either 5'- to 3'- or 3'- to 5'-direction to yield nucleoside 5'-phosphates.. Its function is as follows. Bidirectionally degrades single-stranded DNA into large acid-insoluble oligonucleotides, which are then degraded further into small acid-soluble oligonucleotides. This is Exodeoxyribonuclease 7 large subunit from Bordetella pertussis (strain Tohama I / ATCC BAA-589 / NCTC 13251).